Consider the following 322-residue polypeptide: Sideroflexin-2 (322 aa).

Met1 is modified (N-acetylmethionine). The next 5 helical transmembrane spans lie at 99–119, 147–167, 174–194, 223–243, and 266–286; these read GMLI…VIFW, ALSY…MNMW, LVGR…NIPM, VGIA…MILL, and LQVL…CGLF.

The protein belongs to the sideroflexin family. As to expression, expressed in brain, heart, kidney, spleen, thymus, liver, stomach and skin.

Its subcellular location is the mitochondrion inner membrane. The protein localises to the mitochondrion outer membrane. The catalysed reaction is L-serine(in) = L-serine(out). Functionally, mitochondrial amino-acid transporter that mediates transport of serine into mitochondria. Involved in mitochondrial iron homeostasis by regulating heme biosynthesis. The chain is Sideroflexin-2 from Mus musculus (Mouse).